The following is a 388-amino-acid chain: Myosin light chain kinase family member 4 (388 aa).

Residues 106–361 (VSKTEILGGG…ASEALKHPWL (256 aa)) form the Protein kinase domain. ATP is bound by residues 112–120 (LGGGRFGQV) and Lys135. Catalysis depends on Asp227, which acts as the Proton acceptor.

Belongs to the protein kinase superfamily. CAMK Ser/Thr protein kinase family.

The enzyme catalyses L-seryl-[protein] + ATP = O-phospho-L-seryl-[protein] + ADP + H(+). The catalysed reaction is L-threonyl-[protein] + ATP = O-phospho-L-threonyl-[protein] + ADP + H(+). The protein is Myosin light chain kinase family member 4 (MYLK4) of Homo sapiens (Human).